The primary structure comprises 341 residues: tRNA N6-adenosine threonylcarbamoyltransferase (341 aa).

The Fe cation site is built by H115 and H119. Substrate-binding positions include 137–141 (AVSGG), D170, G183, D187, and N276. A Fe cation-binding site is contributed by D306.

The protein belongs to the KAE1 / TsaD family. The cofactor is Fe(2+).

It localises to the cytoplasm. It catalyses the reaction L-threonylcarbamoyladenylate + adenosine(37) in tRNA = N(6)-L-threonylcarbamoyladenosine(37) in tRNA + AMP + H(+). Required for the formation of a threonylcarbamoyl group on adenosine at position 37 (t(6)A37) in tRNAs that read codons beginning with adenine. Is involved in the transfer of the threonylcarbamoyl moiety of threonylcarbamoyl-AMP (TC-AMP) to the N6 group of A37, together with TsaE and TsaB. TsaD likely plays a direct catalytic role in this reaction. The polypeptide is tRNA N6-adenosine threonylcarbamoyltransferase (Lacticaseibacillus casei (strain BL23) (Lactobacillus casei)).